The chain runs to 277 residues: Digeranylgeranylglyceryl phosphate synthase (277 aa).

7 helical membrane passes run 13–33, 40–60, 89–109, 143–163, 199–219, 220–240, and 256–276; these read PGNA…AGGL, AFAV…NDYF, VALF…AIAI, FLYG…LFAL, RSLY…PLPY, LLGL…CGLA, and WLKA…LAVV.

The protein belongs to the UbiA prenyltransferase family. DGGGP synthase subfamily. The cofactor is Mg(2+).

The protein resides in the cell membrane. It carries out the reaction sn-3-O-(geranylgeranyl)glycerol 1-phosphate + (2E,6E,10E)-geranylgeranyl diphosphate = 2,3-bis-O-(geranylgeranyl)-sn-glycerol 1-phosphate + diphosphate. It participates in membrane lipid metabolism; glycerophospholipid metabolism. Functionally, prenyltransferase that catalyzes the transfer of the geranylgeranyl moiety of geranylgeranyl diphosphate (GGPP) to the C2 hydroxyl of (S)-3-O-geranylgeranylglyceryl phosphate (GGGP). This reaction is the second ether-bond-formation step in the biosynthesis of archaeal membrane lipids. This Natronomonas pharaonis (strain ATCC 35678 / DSM 2160 / CIP 103997 / JCM 8858 / NBRC 14720 / NCIMB 2260 / Gabara) (Halobacterium pharaonis) protein is Digeranylgeranylglyceryl phosphate synthase.